The following is a 445-amino-acid chain: NADH-quinone oxidoreductase subunit F (445 aa).

61–70 serves as a coordination point for NAD(+); sequence GRGGAGFSTG. 174 to 221 provides a ligand contact to FMN; sequence GAGRYICGEETALINSLEGRRANPRSKPPFPATSGVWGKPTCVNNVET. [4Fe-4S] cluster contacts are provided by Cys351, Cys354, Cys357, and Cys398.

The protein belongs to the complex I 51 kDa subunit family. As to quaternary structure, composed of 13 different subunits. Subunits NuoCD, E, F, and G constitute the peripheral sector of the complex. FMN is required as a cofactor. [4Fe-4S] cluster serves as cofactor.

It catalyses the reaction a quinone + NADH + 5 H(+)(in) = a quinol + NAD(+) + 4 H(+)(out). NDH-1 shuttles electrons from NADH, via FMN and iron-sulfur (Fe-S) centers, to quinones in the respiratory chain. The immediate electron acceptor for the enzyme in this species is believed to be ubiquinone. Couples the redox reaction to proton translocation (for every two electrons transferred, four hydrogen ions are translocated across the cytoplasmic membrane), and thus conserves the redox energy in a proton gradient. The polypeptide is NADH-quinone oxidoreductase subunit F (nuoF) (Salmonella typhimurium (strain LT2 / SGSC1412 / ATCC 700720)).